We begin with the raw amino-acid sequence, 406 residues long: COP9 signalosome complex subunit 4 (406 aa).

Alanine 2 bears the N-acetylalanine mark. Lysine 25 is subject to N6-acetyllysine. The PCI domain maps to tyrosine 197–alanine 366.

It belongs to the CSN4 family. In terms of assembly, component of the CSN complex, composed of COPS1/GPS1, COPS2, COPS3, COPS4, COPS5, COPS6, COPS7 (COPS7A or COPS7B), COPS8 and COPS9. In the complex, it probably interacts directly with COPS1, COPS2, COPS3, COPS5, COPS6, COPS7 (COPS7A or COPS7B) and COPS8. Interacts with TOR1A; the interaction is direct and associates TOR1A and SNAPIN with the CSN complex. Interacts with STON2; controls STON2 neddylation levels. Interacts with ERCC6.

The protein resides in the cytoplasm. It localises to the nucleus. The protein localises to the cytoplasmic vesicle. It is found in the secretory vesicle. Its subcellular location is the synaptic vesicle. Its function is as follows. Component of the COP9 signalosome complex (CSN), a complex involved in various cellular and developmental processes. The CSN complex is an essential regulator of the ubiquitin (Ubl) conjugation pathway by mediating the deneddylation of the cullin subunits of SCF-type E3 ligase complexes, leading to decrease the Ubl ligase activity of SCF-type complexes such as SCF, CSA or DDB2. Also involved in the deneddylation of non-cullin subunits such as STON2. The complex is also involved in phosphorylation of p53/TP53, c-jun/JUN, IkappaBalpha/NFKBIA, ITPK1, IRF8/ICSBP and SNAPIN, possibly via its association with CK2 and PKD kinases. CSN-dependent phosphorylation of TP53 and JUN promotes and protects degradation by the Ubl system, respectively. This is COP9 signalosome complex subunit 4 (Cops4) from Mus musculus (Mouse).